The following is a 201-amino-acid chain: 3-isopropylmalate dehydratase small subunit (201 aa).

Belongs to the LeuD family. LeuD type 1 subfamily. As to quaternary structure, heterodimer of LeuC and LeuD.

The enzyme catalyses (2R,3S)-3-isopropylmalate = (2S)-2-isopropylmalate. It functions in the pathway amino-acid biosynthesis; L-leucine biosynthesis; L-leucine from 3-methyl-2-oxobutanoate: step 2/4. In terms of biological role, catalyzes the isomerization between 2-isopropylmalate and 3-isopropylmalate, via the formation of 2-isopropylmaleate. This is 3-isopropylmalate dehydratase small subunit from Shewanella sp. (strain ANA-3).